Reading from the N-terminus, the 1680-residue chain is MLTSPEPKGLVPFTAESLELIKNHIAKKCNEEHEEEDLKPSWGLEAGKKLPFAYGTLPQGTVSEPLEDVDPYYYVKRNTFMVLNRNRVIFRFNAVSILCTLSPLSSLRRAVIKVLVHPLFRLLILISVLTDSILMCMSNLPEWILAVENTLLGIYTFEILVKVIARGIWAGSFSFLGDLWNWLDFSVTLFELITRSSPLSSLPMFKTIRTLRILKIIPLNHGLQSIVVTLVQCLKKLLGAIALALFFLTVSSLFGMGLFMGNLKHKCVRWPQEDGNDVMYNGTGSQYHILERENFYYMEGARYALLCGNKTDAGLCPEGYMCVKEGSNPDNGFTSFDNFGWALLAMFRLMTQDYPELLYHQILYASGKIYMIFFVLISFWFAFYMASLFLGILTMAYEQEKQRASEESRDMDSKCHQTVKEFEEEHEGAEMETTQIEMKKRSPTSINTTLDILEDTALGHKEEPETSRKECPLCWYKFTKTCFIWKCSPCWIKLNEFADRIITHPLFDLFLVICIILNICFLALEHFPMSEELMSLLAIGNLVFIGIYTIEMILKIIAMHPYGYFQISWHIFDSILVVLGLTEMLLADIEEITVFILVPLIFIKLGKYAPPFKNLMRILGRALVALKDLVLLVSIFIYFSAVFGMKLFGRSYKDCVCHVDQDCQRQRWHMSDFLHAYVTVFRILCGEWIETLWECMEVAGEAWCIPFYMMVILIGNLLILYLFVALVSSFASYDATTEVSKEAKNLQLAVAWIKMVINCVLLKILCKEKTVSTEATDQTCDPSVKENISGHTLSELSNTQTFLRYKDQSSGTEKTPVTESESQSLIASPSVSETVPIASGESDIENLDNKETRSKSANGSSKEKMKQSSSSECSTVDIAISEEEEMVYEHEKSKLHKNGYERKSSAGQVSRESRNGKIWRNIRKTCCKIVENSWFECFIGLVTLLCTGTLALEDIYIDQRKTIKIFLEYGDMIFAYIFILEMLLKWVAYGFKAYFSNNWYKLDFMVVIVLCLSLIGKTREDLNPLASIKFLRALRVLSQFERMKVVLRALIKTTLPAVSVFLVCLMIWLLFSVMGVFLFAGKFYECIDPTRGERFSVFEVMNKSQCENLVFNESMPWENAKLNFDNVGNGFLSLFQVATFNGWISIMNSAIDSVGVYMQPSFEHSLHMYTYFIIFVVFGLFLPLCMLIGVIIRNFNKQKIKQGGSNIFITVKQKKQYRALKKLLYADSQKPAARPRNKFQGFICDVVTHRVFNVIIILLICFQATTIMIQNDEQSPQIETAVFWMNSLFTMLFTLECILKLTAFRCHYFTSAWNVHDFMVVVFSITGLLLPLSIGQYFVPPSLVQLLLLSRIIHVLRPGKGPKVFHDLMLPLMLSLPALLNIALLIFLVMFIYAIFGMYNFAYVKKEAGINDVSNFETFGSSMLCLFQVTTFSGWDGMLDAIFNSQWSDCDPDKINPGTQVRGDCGSPSVGIFYFVSYILISWLIIVNMYVVLIMEFLSIPSKRKNRTLSEDDFRRFFKVWNRFDPDRTQYIDSTKLSDFAAALDPPLFMAKPNKGQLVAMDLPMAAGDRIHCLDILLAFTKRVMGKDERVEKILSEIESGFMLANPFKITYEPITTTLKRKQEAVSATIIQRAYKSYRLRQSDKKIQDIPEIDDGREDPNSKGVHSGQIEEKASIQTQI.

The Cytoplasmic portion of the chain corresponds to Met-1–His-117. The stretch at Thr-100–Lys-401 is one I repeat. Residues Pro-118 to Met-137 traverse the membrane as a helical segment. Residues Ser-138 to Pro-141 lie on the Extracellular side of the membrane. Residues Glu-142–Gly-167 form a helical membrane-spanning segment. Topologically, residues Ile-168–Asp-178 are cytoplasmic. A helical membrane pass occupies residues Leu-179–Ser-196. Over Ser-197–Ser-200 the chain is Extracellular. The chain crosses the membrane as a helical span at residues Ser-201–Leu-219. Residues Asn-220–Leu-237 lie on the Cytoplasmic side of the membrane. A helical membrane pass occupies residues Leu-238–Phe-259. At Met-260–Asn-338 the chain is on the extracellular side. Cys-267 and Cys-307 are disulfide-bonded. Asn-281 and Asn-309 each carry an N-linked (GlcNAc...) asparagine glycan. Residues Phe-339–Ser-366 constitute an intramembrane region (pore-forming). Gly-367 is a topological domain (extracellular). The chain crosses the membrane as a helical span at residues Lys-368–Glu-407. Over Ser-408 to Pro-505 the chain is Cytoplasmic. An II repeat occupies Cys-487–Val-756. The chain crosses the membrane as a helical span at residues Leu-506 to Phe-521. At Leu-522–Ser-530 the chain is on the extracellular side. A helical membrane pass occupies residues Glu-531 to Met-559. Topologically, residues His-560–Ser-568 are cytoplasmic. Residues Trp-569 to Leu-586 traverse the membrane as a helical segment. At Ala-587–Ile-592 the chain is on the extracellular side. A helical transmembrane segment spans residues Thr-593–Tyr-608. At Ala-609–Ala-625 the chain is on the cytoplasmic side. The chain crosses the membrane as a helical span at residues Leu-626–Asp-654. At Cys-655–Asp-672 the chain is on the extracellular side. 2 cysteine pairs are disulfide-bonded: Cys-657–Cys-663 and Cys-695–Cys-704. An intramembrane region (pore-forming) is located at residues Phe-673 to Ala-699. Residue Gly-700 is a topological domain, extracellular. The chain crosses the membrane as a helical span at residues Glu-701 to Ala-731. Residues Ser-732–Ser-933 are Cytoplasmic-facing. Residues Asp-807–Glu-833 are compositionally biased toward polar residues. Residues Asp-807 to Ser-874 are disordered. Phosphoserine is present on Ser-842. One copy of the III repeat lies at Asn-915 to Leu-1223. The helical transmembrane segment at Trp-934 to Leu-952 threads the bilayer. Over Glu-953–Arg-960 the chain is Extracellular. Residues Lys-961–Tyr-989 traverse the membrane as a helical segment. Topologically, residues Gly-990–Asn-997 are cytoplasmic. The chain crosses the membrane as a helical span at residues Asn-998–Arg-1019. Position 1020 (Glu-1020) is a topological domain, extracellular. A helical transmembrane segment spans residues Asp-1021–Gln-1039. Topologically, residues Phe-1040–Thr-1054 are cytoplasmic. Residues Leu-1055 to Phe-1079 form a helical membrane-spanning segment. Topologically, residues Ala-1080–Asn-1126 are extracellular. Cysteines 1086 and 1106 form a disulfide. N-linked (GlcNAc...) asparagine glycosylation is found at Asn-1102 and Asn-1112. The segment at residues Val-1127 to Ser-1153 is an intramembrane region (pore-forming). Residues Val-1154–Leu-1166 lie on the Extracellular side of the membrane. A helical membrane pass occupies residues His-1167–Lys-1201. The Cytoplasmic portion of the chain corresponds to Gln-1202–His-1249. An IV repeat occupies Ala-1232–Gln-1530. The helical transmembrane segment at Arg-1250–Asn-1271 threads the bilayer. The Extracellular segment spans residues Asp-1272–Ser-1275. Residues Pro-1276–Phe-1304 traverse the membrane as a helical segment. At Arg-1305–Ser-1311 the chain is on the cytoplasmic side. The chain crosses the membrane as a helical span at residues Ala-1312 to Tyr-1337. At Phe-1338–Pro-1340 the chain is on the extracellular side. The helical transmembrane segment at Pro-1341–Gly-1361 threads the bilayer. Over Pro-1362–Leu-1376 the chain is Cytoplasmic. A helical transmembrane segment spans residues Pro-1377–Phe-1401. Residues Ala-1402 to Phe-1419 are Extracellular-facing. The segment at residues Gly-1420–Phe-1443 is an intramembrane region (pore-forming). Residues Asn-1444 to Ser-1467 lie on the Extracellular side of the membrane. An intrachain disulfide couples Cys-1450 to Cys-1465. Residues Pro-1468 to Lys-1503 traverse the membrane as a helical segment. The Cytoplasmic segment spans residues Arg-1504–Ile-1680. The interval Lys-1646 to Ile-1680 is disordered.

Belongs to the sodium channel (TC 1.A.1.10) family. SCN7A subfamily. The sodium channel formed by SCN7A is probably a heterooligomeric complex consisting of the ion conducting pore forming alpha subunit SCN7A and regulatory beta subunits such as SCN3B. Interacts with ATP1A1; activates ATP1A1 and thereby indirectly signals to nearby neurons to regulate sodium homeostasis. Not tissue specific but widely expressed.

The protein localises to the cell membrane. It catalyses the reaction Na(+)(in) = Na(+)(out). Functionally, sodium leak channel functioning as an osmosensor regulating sodium ion levels in various tissues and organs. While most sodium channels are voltage-gated, SCN7A is not and lets sodium flow through membrane along its concentration gradient. In glial cells of the central nervous system, senses body-fluid sodium levels and controls salt intake behavior as well as voluntary water intake through activation of nearby neurons to maintain appropriate sodium levels in the body. By mediating sodium influx into keratinocytes, also plays a role in skin barrier homeostasis. The protein is Sodium channel protein type 7 subunit alpha of Rattus norvegicus (Rat).